The following is a 560-amino-acid chain: Formate--tetrahydrofolate ligase (560 aa).

69–76 contributes to the ATP binding site; the sequence is TPAGEGKS.

Belongs to the formate--tetrahydrofolate ligase family.

The catalysed reaction is (6S)-5,6,7,8-tetrahydrofolate + formate + ATP = (6R)-10-formyltetrahydrofolate + ADP + phosphate. It participates in one-carbon metabolism; tetrahydrofolate interconversion. The chain is Formate--tetrahydrofolate ligase from Bacillus pumilus (strain SAFR-032).